A 299-amino-acid chain; its full sequence is Sulfate adenylyltransferase subunit 2 (299 aa).

Belongs to the PAPS reductase family. CysD subfamily. In terms of assembly, sulfate-activating enzymes, NodP and NodQ, may be physically associated.

The catalysed reaction is sulfate + ATP + H(+) = adenosine 5'-phosphosulfate + diphosphate. Its function is as follows. Proposed to provide activated sulfate for transfer to nod factor. The protein is Sulfate adenylyltransferase subunit 2 (nodP) of Rhizobium meliloti (strain 1021) (Ensifer meliloti).